Consider the following 132-residue polypeptide: Large ribosomal subunit protein uL14 (132 aa).

The protein belongs to the universal ribosomal protein uL14 family. As to quaternary structure, part of the 50S ribosomal subunit. Forms a cluster with proteins L3 and L24e, part of which may contact the 16S rRNA in 2 intersubunit bridges.

In terms of biological role, binds to 23S rRNA. Forms part of two intersubunit bridges in the 70S ribosome. This Methanosphaera stadtmanae (strain ATCC 43021 / DSM 3091 / JCM 11832 / MCB-3) protein is Large ribosomal subunit protein uL14.